The chain runs to 160 residues: Transcriptional repressor NrdR (160 aa).

A zinc finger spans residues 3–34; it reads CPFCRHADTQVVDSRVSEDGATIRRRRRCPAC. The ATP-cone domain occupies 49-139; sequence PSVVKKDGSR…VYRRFEDVSE (91 aa).

It belongs to the NrdR family. Zn(2+) is required as a cofactor.

Functionally, negatively regulates transcription of bacterial ribonucleotide reductase nrd genes and operons by binding to NrdR-boxes. The protein is Transcriptional repressor NrdR of Paraburkholderia phytofirmans (strain DSM 17436 / LMG 22146 / PsJN) (Burkholderia phytofirmans).